The following is a 100-amino-acid chain: NADH-quinone oxidoreductase subunit K (100 aa).

The next 3 membrane-spanning stretches (helical) occupy residues 4 to 24, 28 to 48, and 60 to 80; these read LQHG…GLLV, LLFM…AFIV, and VMYI…LALL.

This sequence belongs to the complex I subunit 4L family. As to quaternary structure, NDH-1 is composed of 13 different subunits. Subunits NuoA, H, J, K, L, M, N constitute the membrane sector of the complex.

It is found in the cell inner membrane. The catalysed reaction is a quinone + NADH + 5 H(+)(in) = a quinol + NAD(+) + 4 H(+)(out). NDH-1 shuttles electrons from NADH, via FMN and iron-sulfur (Fe-S) centers, to quinones in the respiratory chain. The immediate electron acceptor for the enzyme in this species is believed to be ubiquinone. Couples the redox reaction to proton translocation (for every two electrons transferred, four hydrogen ions are translocated across the cytoplasmic membrane), and thus conserves the redox energy in a proton gradient. The polypeptide is NADH-quinone oxidoreductase subunit K (Serratia proteamaculans (strain 568)).